Reading from the N-terminus, the 1527-residue chain is ATP-binding cassette sub-family C member 3 (1527 aa).

At 1 to 32 (MDALCGSGELGSKFWDSNLSVHTENPDLTPCF) the chain is on the extracellular side. The N-linked (GlcNAc...) asparagine glycan is linked to Asn-18. Residues 33–53 (QNSLLAWVPCIYLWVALPCYL) form a helical membrane-spanning segment. The Cytoplasmic segment spans residues 54–73 (LYLRHHCRGYIILSHLSKLK). The helical transmembrane segment at 74–94 (MVLGVLLWCVSWADLFYSFHG) threads the bilayer. Residues 95 to 99 (LVHGR) are Extracellular-facing. Residues 100-120 (APAPVFFVTPLVVGVTMLLAT) form a helical membrane-spanning segment. Over 121 to 132 (LLIQYERLQGVQ) the chain is Cytoplasmic. The chain crosses the membrane as a helical span at residues 133 to 153 (SSGVLIIFWFLCVVCAIVPFR). At 154 to 171 (SKILLAKAEGEISDPFRF) the chain is on the extracellular side. The chain crosses the membrane as a helical span at residues 172-192 (TTFYIHFALVLSALILACFRE). Topologically, residues 193 to 302 (KPPFFSAKNV…RPRKPSFLKA (110 aa)) are cytoplasmic. The helical transmembrane segment at 303-323 (LLATFGSSFLISACFKLIQDL) threads the bilayer. Residues 311-594 (FLISACFKLI…LPQLISNLTQ (284 aa)) form the ABC transmembrane type-1 1 domain. Residues 324 to 349 (LSFINPQLLSILIRFISNPMAPSWWG) lie on the Extracellular side of the membrane. A helical transmembrane segment spans residues 350-370 (FLVAGLMFLCSMMQSLILQHY). The Cytoplasmic segment spans residues 371-426 (YHYIFVTGVKFRTGIMGVIYRKALVITNSVKRASTVGEIVNLMSVDAQRFMDLAPF). The helical transmembrane segment at 427-447 (LNLLWSAPLQIILAIYFLWQN) threads the bilayer. The Extracellular segment spans residues 448-450 (LGP). A helical transmembrane segment spans residues 451–471 (SVLAGVAFMVLLIPLNGAVAV). Residues 472-533 (KMRAFQVKQM…LLRTAAYLHT (62 aa)) are Cytoplasmic-facing. Residues 534-554 (TTTFTWMCSPFLVTLITLWVY) traverse the membrane as a helical segment. The Extracellular portion of the chain corresponds to 555–576 (VYVDPNNVLDAEKAFVSVSLFN). Residues 577-597 (ILRLPLNMLPQLISNLTQASV) traverse the membrane as a helical segment. At 598-963 (SLKRIQQFLS…VELSVFWDYA (366 aa)) the chain is on the cytoplasmic side. Residues 629 to 851 (IHSGTFTWAQ…NGSFANFLCN (223 aa)) enclose the ABC transporter 1 domain. ATP is bound at residue 661–668 (GPVGCGKS). Residues Ser-908 and Ser-911 each carry the phosphoserine modification. Residues 910-932 (LSSDGEGQGRPVPRRHLGPSEKV) form a disordered region. The chain crosses the membrane as a helical span at residues 964–984 (KAVGLCTTLAICLLYVGQSAA). The ABC transmembrane type-1 2 domain maps to 971–1252 (TLAICLLYVG…MIRMMSDLES (282 aa)). Residues 985–1021 (AIGANVWLSAWTNDAMADSRQNNTSLRLGVYAALGIL) lie on the Extracellular side of the membrane. Residues Asn-1006 and Asn-1007 are each glycosylated (N-linked (GlcNAc...) asparagine). The chain crosses the membrane as a helical span at residues 1022–1042 (QGFLVMLAAMAMAAGGIQAAR). Over 1043–1085 (VLHQALLHNKIRSPQSFFDTTPSGRILNCFSKDIYVVDEVLAP) the chain is Cytoplasmic. The helical transmembrane segment at 1086 to 1106 (VILMLLNSFFNAISTLVVIMA) threads the bilayer. Ser-1107 is a topological domain (extracellular). A helical membrane pass occupies residues 1108 to 1128 (TPLFTVVILPLAVLYTLVQRF). The Cytoplasmic segment spans residues 1129–1199 (YAATSRQLKR…ISNRWLSIGV (71 aa)). A helical membrane pass occupies residues 1200 to 1220 (EFVGNCVVLFAALFAVIGRSS). The Extracellular segment spans residues 1221 to 1222 (LN). A helical transmembrane segment spans residues 1223–1243 (PGLVGLSVSYSLQVTFALNWM). Residues 1244–1527 (IRMMSDLESN…YGMARDAGLA (284 aa)) are Cytoplasmic-facing. Residues 1291 to 1523 (FRNYSVRYRP…RGIFYGMARD (233 aa)) enclose the ABC transporter 2 domain. 1323–1330 (GRTGAGKS) provides a ligand contact to ATP.

Belongs to the ABC transporter superfamily. ABCC family. Conjugate transporter (TC 3.A.1.208) subfamily. Mainly expressed in the liver. Also expressed in small intestine, colon, prostate, testis, brain and at a lower level in the kidney. In testis, localized to peritubular myoid cells, Leydig cells, along the basal membrane of Sertoli cells and moderately in the adluminal compartment of the seminiferous tubules.

The protein localises to the basolateral cell membrane. The protein resides in the basal cell membrane. The catalysed reaction is taurocholate(in) + ATP + H2O = taurocholate(out) + ADP + phosphate + H(+). It carries out the reaction glycocholate(in) + ATP + H2O = glycocholate(out) + ADP + phosphate + H(+). The enzyme catalyses taurolithocholate 3-sulfate(in) + ATP + H2O = taurolithocholate 3-sulfate(out) + ADP + phosphate + H(+). It catalyses the reaction taurochenodeoxycholate 3-sulfate(in) + ATP + H2O = taurochenodeoxycholate 3-sulfate(out) + ADP + phosphate + H(+). The catalysed reaction is an S-substituted glutathione(in) + ATP + H2O = an S-substituted glutathione(out) + ADP + phosphate + H(+). It carries out the reaction ATP + H2O + xenobioticSide 1 = ADP + phosphate + xenobioticSide 2.. The enzyme catalyses 17beta-estradiol 17-O-(beta-D-glucuronate)(in) + ATP + H2O = 17beta-estradiol 17-O-(beta-D-glucuronate)(out) + ADP + phosphate + H(+). It catalyses the reaction dehydroepiandrosterone 3-sulfate(in) + ATP + H2O = dehydroepiandrosterone 3-sulfate(out) + ADP + phosphate + H(+). The catalysed reaction is leukotriene C4(in) + ATP + H2O = leukotriene C4(out) + ADP + phosphate + H(+). It carries out the reaction (4Z,15Z)-bilirubin IXalpha C8-beta-D-glucuronoside(in) + ATP + H2O = (4Z,15Z)-bilirubin IXalpha C8-beta-D-glucuronoside(out) + ADP + phosphate + H(+). The enzyme catalyses (4Z,15Z)-bilirubin IXalpha C8,C12-beta-D-bisglucuronoside(in) + ATP + H2O = (4Z,15Z)-bilirubin IXalpha C8,C12-beta-D-bisglucuronoside(out) + ADP + phosphate + H(+). Functionally, ATP-dependent transporter of the ATP-binding cassette (ABC) family that binds and hydrolyzes ATP to enable active transport of various substrates including many drugs, toxicants and endogenous compound across cell membranes. Transports glucuronide conjugates such as bilirubin diglucuronide, estradiol-17-beta-o-glucuronide and GSH conjugates such as leukotriene C4 (LTC4). Transports also various bile salts (taurocholate, glycocholate, taurochenodeoxycholate-3-sulfate, taurolithocholate- 3-sulfate). Does not contribute substantially to bile salt physiology but provides an alternative route for the export of bile acids and glucuronides from cholestatic hepatocytes. May contribute to regulate the transport of organic compounds in testes across the blood-testis-barrier. Can confer resistance to various anticancer drugs, methotrexate, tenoposide and etoposide, by decreasing accumulation of these drugs in cells. In Homo sapiens (Human), this protein is ATP-binding cassette sub-family C member 3.